The primary structure comprises 239 residues: tRNA (guanine-N(7)-)-methyltransferase (239 aa).

S-adenosyl-L-methionine is bound by residues E68, E93, D120, and D143. D143 is an active-site residue. Residues K147, D180, and 217–220 (TKFE) contribute to the substrate site.

The protein belongs to the class I-like SAM-binding methyltransferase superfamily. TrmB family.

It catalyses the reaction guanosine(46) in tRNA + S-adenosyl-L-methionine = N(7)-methylguanosine(46) in tRNA + S-adenosyl-L-homocysteine. It participates in tRNA modification; N(7)-methylguanine-tRNA biosynthesis. In terms of biological role, catalyzes the formation of N(7)-methylguanine at position 46 (m7G46) in tRNA. The polypeptide is tRNA (guanine-N(7)-)-methyltransferase (Vibrio vulnificus (strain CMCP6)).